The chain runs to 402 residues: tRNA(Met) cytidine acetate ligase (402 aa).

ATP contacts are provided by residues 7 to 20 (ITEY…HELH), G102, N171, and R196.

The protein belongs to the TmcAL family.

It is found in the cytoplasm. It carries out the reaction cytidine(34) in elongator tRNA(Met) + acetate + ATP = N(4)-acetylcytidine(34) in elongator tRNA(Met) + AMP + diphosphate. In terms of biological role, catalyzes the formation of N(4)-acetylcytidine (ac(4)C) at the wobble position of elongator tRNA(Met), using acetate and ATP as substrates. First activates an acetate ion to form acetyladenylate (Ac-AMP) and then transfers the acetyl group to tRNA to form ac(4)C34. The chain is tRNA(Met) cytidine acetate ligase from Clostridium perfringens (strain ATCC 13124 / DSM 756 / JCM 1290 / NCIMB 6125 / NCTC 8237 / Type A).